Consider the following 322-residue polypeptide: Acetyl-coenzyme A carboxylase carboxyl transferase subunit alpha (322 aa).

One can recognise a CoA carboxyltransferase C-terminal domain in the interval 39-293 (RLAAKSQQLT…KRALAESLRQ (255 aa)).

The protein belongs to the AccA family. In terms of assembly, acetyl-CoA carboxylase is a heterohexamer composed of biotin carboxyl carrier protein (AccB), biotin carboxylase (AccC) and two subunits each of ACCase subunit alpha (AccA) and ACCase subunit beta (AccD).

The protein resides in the cytoplasm. The catalysed reaction is N(6)-carboxybiotinyl-L-lysyl-[protein] + acetyl-CoA = N(6)-biotinyl-L-lysyl-[protein] + malonyl-CoA. The protein operates within lipid metabolism; malonyl-CoA biosynthesis; malonyl-CoA from acetyl-CoA: step 1/1. Its function is as follows. Component of the acetyl coenzyme A carboxylase (ACC) complex. First, biotin carboxylase catalyzes the carboxylation of biotin on its carrier protein (BCCP) and then the CO(2) group is transferred by the carboxyltransferase to acetyl-CoA to form malonyl-CoA. The protein is Acetyl-coenzyme A carboxylase carboxyl transferase subunit alpha of Ralstonia nicotianae (strain ATCC BAA-1114 / GMI1000) (Ralstonia solanacearum).